Here is a 237-residue protein sequence, read N- to C-terminus: MTDPHPNRPHRNFYGRRKGHDLRDSQERYLAEDLAKLSPGAVDWDVNPDRTPLDLKERFGGKDIWLEVGFGGGEHLVHQAASNPDVAIIGCEPYINGVAMLLGKIRAAGVGNLAVYPGDARDLFDVLPKGSVAKAFLLYPDPWPKARHHRRRFVTTEHLEPLHRAMRPGAEFRVATDIEDYVRQTMEEVPKAGFEWLAEAASDWREPWCDWVSTRYEQKALREGRVPHYMTFQKRSL.

S-adenosyl-L-methionine-binding residues include Glu67, Glu92, Asp119, and Asp141. Residue Asp141 is part of the active site. Substrate-binding positions include Lys145, Asp177, and Thr214–Glu217.

The protein belongs to the class I-like SAM-binding methyltransferase superfamily. TrmB family.

The catalysed reaction is guanosine(46) in tRNA + S-adenosyl-L-methionine = N(7)-methylguanosine(46) in tRNA + S-adenosyl-L-homocysteine. It functions in the pathway tRNA modification; N(7)-methylguanine-tRNA biosynthesis. Catalyzes the formation of N(7)-methylguanine at position 46 (m7G46) in tRNA. This chain is tRNA (guanine-N(7)-)-methyltransferase, found in Jannaschia sp. (strain CCS1).